The sequence spans 92 residues: RNA-binding protein Hfq (92 aa).

The Sm domain occupies 9 to 68; it reads DPFLNALRRERVPVSIYLVNGIKLQGQVESFDQFVILLKNTVSQMVYKHAISTVVPSRPF.

This sequence belongs to the Hfq family. Homohexamer.

Functionally, RNA chaperone that binds small regulatory RNA (sRNAs) and mRNAs to facilitate mRNA translational regulation in response to envelope stress, environmental stress and changes in metabolite concentrations. Also binds with high specificity to tRNAs. In Shewanella halifaxensis (strain HAW-EB4), this protein is RNA-binding protein Hfq.